Consider the following 288-residue polypeptide: 4-hydroxy-3-methylbut-2-enyl diphosphate reductase (288 aa).

[4Fe-4S] cluster is bound at residue Cys13. 2 residues coordinate (2E)-4-hydroxy-3-methylbut-2-enyl diphosphate: His41 and His75. Residues His41 and His75 each coordinate dimethylallyl diphosphate. Isopentenyl diphosphate is bound by residues His41 and His75. Cys97 is a binding site for [4Fe-4S] cluster. His130 serves as a coordination point for (2E)-4-hydroxy-3-methylbut-2-enyl diphosphate. Residue His130 participates in dimethylallyl diphosphate binding. His130 serves as a coordination point for isopentenyl diphosphate. Glu132 (proton donor) is an active-site residue. Thr168 serves as a coordination point for (2E)-4-hydroxy-3-methylbut-2-enyl diphosphate. Cys199 contacts [4Fe-4S] cluster. (2E)-4-hydroxy-3-methylbut-2-enyl diphosphate-binding residues include Ser227, Ser228, Asn229, and Ser271. Residues Ser227, Ser228, Asn229, and Ser271 each contribute to the dimethylallyl diphosphate site. Isopentenyl diphosphate is bound by residues Ser227, Ser228, Asn229, and Ser271.

Belongs to the IspH family. [4Fe-4S] cluster is required as a cofactor.

The enzyme catalyses isopentenyl diphosphate + 2 oxidized [2Fe-2S]-[ferredoxin] + H2O = (2E)-4-hydroxy-3-methylbut-2-enyl diphosphate + 2 reduced [2Fe-2S]-[ferredoxin] + 2 H(+). It catalyses the reaction dimethylallyl diphosphate + 2 oxidized [2Fe-2S]-[ferredoxin] + H2O = (2E)-4-hydroxy-3-methylbut-2-enyl diphosphate + 2 reduced [2Fe-2S]-[ferredoxin] + 2 H(+). The protein operates within isoprenoid biosynthesis; dimethylallyl diphosphate biosynthesis; dimethylallyl diphosphate from (2E)-4-hydroxy-3-methylbutenyl diphosphate: step 1/1. It functions in the pathway isoprenoid biosynthesis; isopentenyl diphosphate biosynthesis via DXP pathway; isopentenyl diphosphate from 1-deoxy-D-xylulose 5-phosphate: step 6/6. Functionally, catalyzes the conversion of 1-hydroxy-2-methyl-2-(E)-butenyl 4-diphosphate (HMBPP) into a mixture of isopentenyl diphosphate (IPP) and dimethylallyl diphosphate (DMAPP). Acts in the terminal step of the DOXP/MEP pathway for isoprenoid precursor biosynthesis. This is 4-hydroxy-3-methylbut-2-enyl diphosphate reductase from Phocaeicola vulgatus (strain ATCC 8482 / DSM 1447 / JCM 5826 / CCUG 4940 / NBRC 14291 / NCTC 11154) (Bacteroides vulgatus).